Here is a 329-residue protein sequence, read N- to C-terminus: Beta-ketoacyl-[acyl-carrier-protein] synthase III (329 aa).

Active-site residues include cysteine 114 and histidine 254. Positions glutamine 255–arginine 259 are ACP-binding. Asparagine 284 is an active-site residue.

It belongs to the thiolase-like superfamily. FabH family. As to quaternary structure, homodimer.

The protein resides in the cytoplasm. The enzyme catalyses malonyl-[ACP] + acetyl-CoA + H(+) = 3-oxobutanoyl-[ACP] + CO2 + CoA. It participates in lipid metabolism; fatty acid biosynthesis. Catalyzes the condensation reaction of fatty acid synthesis by the addition to an acyl acceptor of two carbons from malonyl-ACP. Catalyzes the first condensation reaction which initiates fatty acid synthesis and may therefore play a role in governing the total rate of fatty acid production. Possesses both acetoacetyl-ACP synthase and acetyl transacylase activities. Its substrate specificity determines the biosynthesis of branched-chain and/or straight-chain of fatty acids. This chain is Beta-ketoacyl-[acyl-carrier-protein] synthase III, found in Roseiflexus sp. (strain RS-1).